Reading from the N-terminus, the 278-residue chain is MLAKYSSTRDMLDADGDTTMSLHSQASATSQRPELGHTEHQRPSSAWRPVALILLTLCLVLLIGLAALGLVFFQFYQLSNTQQDSILQKEEKLGNLSRQLQSLRTQNRKLAETLHHVAEKLCRELYNKTGEHRCSPCPEKWKWHGDKCYQFYKESKSWQGCEYFCIAENSTMLKINTQEVLEFAMPQSYSEFFYSYWTGLSRNSSGKAWLWMDGTPYSSELFDVMIDLTSLRSRDCVTILNGKAFSKDCRELRRCACEKAAAMVKVQSLHEPLSRRWR.

The segment at 1–42 (MLAKYSSTRDMLDADGDTTMSLHSQASATSQRPELGHTEHQR) is disordered. At 1–52 (MLAKYSSTRDMLDADGDTTMSLHSQASATSQRPELGHTEHQRPSSAWRPVAL) the chain is on the cytoplasmic side. A compositionally biased stretch (polar residues) spans 18–32 (TTMSLHSQASATSQR). The helical; Signal-anchor for type II membrane protein transmembrane segment at 53–73 (ILLTLCLVLLIGLAALGLVFF) threads the bilayer. Topologically, residues 74–278 (QFYQLSNTQQ…LHEPLSRRWR (205 aa)) are extracellular. N95 and N169 each carry an N-linked (GlcNAc...) asparagine glycan. The region spanning 144 to 258 (HGDKCYQFYK…CRELRRCACE (115 aa)) is the C-type lectin domain. Intrachain disulfides connect C165–C257 and C236–C249.

It localises to the membrane. This Bos taurus (Bovine) protein is C-type lectin domain family 1 member A (CLEC1A).